Here is a 24-residue protein sequence, read N- to C-terminus: Metallothionein (24 aa).

Residues cysteine 3, cysteine 5, cysteine 8, cysteine 10, cysteine 17, cysteine 19, and cysteine 22 each coordinate Cd(2+).

Belongs to the metallothionein superfamily. Type 8 family. Contains 4 disulfide bonds.

Its function is as follows. Metallothioneins have a high content of cysteine residues that bind various heavy metals. The protein is Metallothionein of Neonectria lugdunensis (Aquatic fungus).